The primary structure comprises 485 residues: Lysophospholipid acyltransferase 5 (485 aa).

Alanine 2 bears the N-acetylalanine mark. Transmembrane regions (helical) follow at residues 35–55 (ASEQ…FALF), 82–102 (YNFG…FLIL), 108–128 (TITA…AGYY), 139–158 (WTMP…MDYY), 176–196 (IWGV…GAFL), 232–252 (LALG…ITED), and 283–303 (VTCW…FNGL). Residues asparagine 336 and histidine 372 contribute to the active site. Helical transmembrane passes span 362–382 (GLSL…LVCF), 420–440 (LAQQ…FCLF), and 448–468 (VYKS…FILP). The short motif at 482 to 485 (KKME) is the Di-lysine motif element.

The protein belongs to the membrane-bound acyltransferase family.

Its subcellular location is the endoplasmic reticulum membrane. It carries out the reaction a 1-acyl-sn-glycero-3-phosphocholine + an acyl-CoA = a 1,2-diacyl-sn-glycero-3-phosphocholine + CoA. The enzyme catalyses a 1-acyl-sn-glycero-3-phosphoethanolamine + an acyl-CoA = a 1,2-diacyl-sn-glycero-3-phosphoethanolamine + CoA. The catalysed reaction is a 1-acyl-sn-glycero-3-phospho-L-serine + an acyl-CoA = a 1,2-diacyl-sn-glycero-3-phospho-L-serine + CoA. It catalyses the reaction (9Z,12Z)-octadecadienoyl-CoA + a 1-acyl-sn-glycero-3-phosphocholine = 1-acyl-2-(9Z,12Z)-octadecadienoyl-sn-glycero-3-phosphocholine + CoA. It carries out the reaction (5Z,8Z,11Z,14Z)-eicosatetraenoyl-CoA + a 1-acyl-sn-glycero-3-phosphocholine = 1-acyl-2-(5Z,8Z,11Z,14Z-eicosatetraenoyl)-sn-glycero-3-phosphocholine + CoA. The enzyme catalyses dodecanoyl-CoA + 1-hexadecanoyl-sn-glycero-3-phosphocholine = 1-hexadecanoyl-2-dodecanoyl-sn-glycero-3-phosphocholine + CoA. The catalysed reaction is octadecanoyl-CoA + 1-hexadecanoyl-sn-glycero-3-phosphocholine = 1-hexadecanoyl-2-octadecanoyl-sn-glycero-3-phosphocholine + CoA. It catalyses the reaction 1-dodecanoyl-sn-glycero-3-phosphocholine + hexadecanoyl-CoA = 1-dodecanoyl-2-hexadecanoyl-sn-glycero-3-phosphocholine + CoA. It carries out the reaction 1-tetradecanoyl-sn-glycero-3-phosphocholine + hexadecanoyl-CoA = 1-tetradecanoyl-2-hexadecanoyl-sn-glycero-3-phosphocholine + CoA. The enzyme catalyses 1-hexadecanoyl-sn-glycero-3-phosphocholine + hexadecanoyl-CoA = 1,2-dihexadecanoyl-sn-glycero-3-phosphocholine + CoA. The catalysed reaction is 1-octadecanoyl-sn-glycero-3-phosphocholine + hexadecanoyl-CoA = 1-octadecanoyl-2-hexadecanoyl-sn-glycero-3-phosphocholine + CoA. It catalyses the reaction 1-(9Z-octadecenoyl)-sn-glycero-3-phosphocholine + hexadecanoyl-CoA = 1-(9Z-octadecenoyl)-2-hexadecanoyl-sn-glycero-3-phosphocholine + CoA. It carries out the reaction (9Z)-hexadecenoyl-CoA + 1-hexadecanoyl-sn-glycero-3-phosphocholine = 1-hexadecanoyl-2-(9Z-hexadecenoyl)-sn-glycero-3-phosphocholine + CoA. The enzyme catalyses 1-hexadecanoyl-sn-glycero-3-phosphocholine + (9Z)-octadecenoyl-CoA = 1-hexadecanoyl-2-(9Z-octadecenoyl)-sn-glycero-3-phosphocholine + CoA. The catalysed reaction is (9Z,12Z)-octadecadienoyl-CoA + 1-hexadecanoyl-sn-glycero-3-phosphocholine = 1-hexadecanoyl-2-(9Z,12Z-octadecadienoyl)-sn-glycero-3-phosphocholine + CoA. It catalyses the reaction 1-dodecanoyl-sn-glycero-3-phosphocholine + (5Z,8Z,11Z,14Z)-eicosatetraenoyl-CoA = 1-dodecanoyl-2-(5Z,8Z,11Z,14Z)-eicosatetraenoyl-sn-glycero-3-phosphocholine + CoA. It carries out the reaction (5Z,8Z,11Z,14Z)-eicosatetraenoyl-CoA + 1-hexadecanoyl-sn-glycero-3-phosphocholine = 1-hexadecanoyl-2-(5Z,8Z,11Z,14Z-eicosatetraenoyl)-sn-glycero-3-phosphocholine + CoA. The enzyme catalyses 1-octadecanoyl-sn-glycero-3-phosphocholine + (5Z,8Z,11Z,14Z)-eicosatetraenoyl-CoA = 1-octadecanoyl-2-(5Z,8Z,11Z,14Z-eicosatetraenoyl)-sn-glycero-3-phosphocholine + CoA. The catalysed reaction is 1-eicosanoyl-sn-glycero-3-phosphocholine + (5Z,8Z,11Z,14Z)-eicosatetraenoyl-CoA = 1-eicosanoyl-2-(5Z,8Z,11Z,14Z)-eicosatetraenoyl-sn-glycero-3-phosphocholine + CoA. It catalyses the reaction 1-(9Z-octadecenoyl)-sn-glycero-3-phosphocholine + (9Z)-octadecenoyl-CoA = 1,2-di-(9Z-octadecenoyl)-sn-glycero-3-phosphocholine + CoA. It carries out the reaction 1-(9Z-octadecenoyl)-sn-glycero-3-phosphocholine + (9Z,12Z)-octadecadienoyl-CoA = 1-(9Z)-octadecenoyl-2-(9Z,12Z)-octadecadienoyl-sn-glycero-3-phosphocholine + CoA. The enzyme catalyses 1-(9Z-octadecenoyl)-sn-glycero-3-phosphocholine + (5Z,8Z,11Z,14Z)-eicosatetraenoyl-CoA = 1-(9Z)-octadecenoyl-2-(5Z,8Z,11Z,14Z)-icosatetraenoyl-sn-glycero-3-phosphocholine + CoA. The catalysed reaction is a 1-acyl-sn-glycero-3-phosphoethanolamine + (9Z,12Z)-octadecadienoyl-CoA = 1-acyl-2-(9Z,12Z)-octadecadienoyl-sn-glycero-3-phosphoethanolamine + CoA. It catalyses the reaction 1-(9Z-octadecenoyl)-sn-glycero-3-phosphoethanolamine + (9Z,12Z)-octadecadienoyl-CoA = 1-(9Z)-octadecenoyl-2-(9Z,12Z)-octadecadienoyl-sn-glycero-3-phosphoethanolamine + CoA. It carries out the reaction 1-(10Z-heptadecenoyl)-sn-glycero-3-phosphoethanolamine + (9Z,12Z)-octadecadienoyl-CoA = 1-(10Z-heptadecenoyl)-2-(9Z,12Z-octadecadienoyl)-sn-glycero-3-phosphoethanolamine + CoA. The enzyme catalyses a 1-acyl-sn-glycero-3-phosphoethanolamine + (5Z,8Z,11Z,14Z)-eicosatetraenoyl-CoA = 1-acyl-2-(5Z,8Z,11Z,14Z)-eicosatetraenoyl-sn-glycero-3-phosphoethanolamine + CoA. The catalysed reaction is 1-hexadecanoyl-sn-glycero-3-phosphoethanolamine + (5Z,8Z,11Z,14Z)-eicosatetraenoyl-CoA = 1-hexadecanoyl-2-(5Z,8Z,11Z,14Z-eicosatetraenoyl)-sn-glycero-3-phosphoethanolamine + CoA. It catalyses the reaction 1-(9Z-octadecenoyl)-sn-glycero-3-phosphoethanolamine + (5Z,8Z,11Z,14Z)-eicosatetraenoyl-CoA = 1-(9Z)-octadecenoyl-2-(5Z,8Z,11Z,14Z)-eicosatetraenoyl-sn-glycero-3-phosphoethanolamine + CoA. It carries out the reaction 1-(10Z-heptadecenoyl)-sn-glycero-3-phosphoethanolamine + (5Z,8Z,11Z,14Z)-eicosatetraenoyl-CoA = 1-(10Z-heptadecenoyl)-2-(5Z,8Z,11Z,14Z-eicosatetraenoyl)-sn-glycero-3-phosphoethanolamine + CoA. The enzyme catalyses a 1-O-(1Z-alkenyl)-sn-glycero-3-phosphoethanolamine + (5Z,8Z,11Z,14Z)-eicosatetraenoyl-CoA = 1-O-(1Z)-alkenyl-2-(5Z,8Z,11Z,14Z)-eicosatetraenoyl-sn-glycero-3-phosphoethanolamine + CoA. The catalysed reaction is a 1-acyl-sn-glycero-3-phospho-L-serine + (9Z,12Z)-octadecadienoyl-CoA = 1-acyl-2-(9Z,12Z-octadecadienoyl)-sn-glycero-3-phospho-L-serine + CoA. It catalyses the reaction a 1-acyl-sn-glycero-3-phospho-L-serine + (5Z,8Z,11Z,14Z)-eicosatetraenoyl-CoA = 1-acyl-2-(5Z,8Z,11Z,14Z-eicosatetraenoyl)-sn-glycero-3-phospho-L-serine + CoA. It carries out the reaction 1-hexadecanoyl-sn-glycero-3-phospho-L-serine + (9Z)-octadecenoyl-CoA = 1-hexadecanoyl-2-(9Z-octadecenoyl)-sn-glycero-3-phospho-L-serine + CoA. The enzyme catalyses 1-(9Z-octadecenoyl)-sn-glycero-3-phospho-L-serine + (9Z)-octadecenoyl-CoA = 1,2-di-(9Z)-octadecenoyl-sn-glycero-3-phospho-L-serine + CoA. The catalysed reaction is 1-hexadecanoyl-sn-glycero-3-phospho-L-serine + (9Z,12Z)-octadecadienoyl-CoA = 1-hexadecanoyl-2-(9Z,12Z-octadecadienoyl)-sn-glycero-3-phospho-L-serine + CoA. It catalyses the reaction 1-(9Z-octadecenoyl)-sn-glycero-3-phospho-L-serine + (9Z,12Z)-octadecadienoyl-CoA = 1-(9Z-octadecenoyl)-2-(9Z,12Z-octadienoyl)-sn-glycero-3-phospho-L-serine + CoA. It carries out the reaction 1-hexadecanoyl-sn-glycero-3-phospho-L-serine + (5Z,8Z,11Z,14Z)-eicosatetraenoyl-CoA = 1-hexadecanoyl-2-(5Z,8Z,11Z,14Z-eicosatetraenoyl)-sn-glycero-3-phospho-L-serine + CoA. The enzyme catalyses 1-(9Z-octadecenoyl)-sn-glycero-3-phospho-L-serine + (5Z,8Z,11Z,14Z)-eicosatetraenoyl-CoA = 1-(9Z-octadecenoyl)-2-(5Z,8Z,11Z,14Z-eicosatetraenoyl)-sn-glycero-3-phospho-L-serine + CoA. Its pathway is lipid metabolism; phospholipid metabolism. In terms of biological role, lysophospholipid O-acyltransferase (LPLAT) that catalyzes the reacylation step of the phospholipid remodeling process also known as the Lands cycle. Catalyzes transfer of the fatty acyl chain from fatty acyl-CoA to 1-acyl lysophospholipid to form various classes of phospholipids. Converts 1-acyl lysophosphatidylcholine (LPC) into phosphatidylcholine (PC) (LPCAT activity), 1-acyl lysophosphatidylserine (LPS) into phosphatidylserine (PS) (LPSAT activity) and 1-acyl lysophosphatidylethanolamine (LPE) into phosphatidylethanolamine (PE) (LPEAT activity). Favors polyunsaturated fatty acyl-CoAs as acyl donors compared to saturated fatty acyl-CoAs. Has higher activity for LPC acyl acceptors compared to LPEs and LPSs. Can also transfer the fatty acyl chain from fatty acyl-CoA to 1-O-alkyl lysophospholipid or 1-O-alkenyl lysophospholipid with lower efficiency. Acts as a major LPC O-acyltransferase in liver and intestine. As a component of the liver X receptor/NR1H3 or NR1H2 signaling pathway, mainly catalyzes the incorporation of arachidonate into PCs of endoplasmic reticulum (ER) membranes, increasing membrane dynamics and enabling triacylglycerols transfer to nascent very low-density lipoprotein (VLDL) particles. Promotes processing of sterol regulatory protein SREBF1 in hepatocytes, likely by facilitating the translocation of SREBF1-SCAP complex from ER to the Golgi apparatus. Participates in mechanisms by which the liver X receptor/NR1H3 or NR1H2 signaling pathway counteracts lipid-induced ER stress response and inflammation. Down-regulates hepatic inflammation by limiting arachidonic acid availability for synthesis of inflammatory eicosanoids, such as prostaglandins. In enterocytes, acts as a component of a gut-brain feedback loop that coordinates dietary lipid absorption and food intake. Regulates the abundance of PCs containing linoleate and arachidonate in enterocyte membranes, enabling passive diffusion of fatty acids and cholesterol across the membrane for efficient chylomicron assembly. In the intestinal crypt, acts as a component of dietary-responsive phospholipid-cholesterol axis, regulating the biosynthesis of cholesterol and its mitogenic effects on intestinal stem cells. The chain is Lysophospholipid acyltransferase 5 (LPCAT3) from Bos taurus (Bovine).